The following is a 464-amino-acid chain: UDP-N-acetylmuramoyl-tripeptide--D-alanyl-D-alanine ligase (464 aa).

Residue 125–131 (GSNGKTT) coordinates ATP.

It belongs to the MurCDEF family. MurF subfamily.

The protein localises to the cytoplasm. It carries out the reaction D-alanyl-D-alanine + UDP-N-acetyl-alpha-D-muramoyl-L-alanyl-gamma-D-glutamyl-meso-2,6-diaminopimelate + ATP = UDP-N-acetyl-alpha-D-muramoyl-L-alanyl-gamma-D-glutamyl-meso-2,6-diaminopimeloyl-D-alanyl-D-alanine + ADP + phosphate + H(+). It functions in the pathway cell wall biogenesis; peptidoglycan biosynthesis. In terms of biological role, involved in cell wall formation. Catalyzes the final step in the synthesis of UDP-N-acetylmuramoyl-pentapeptide, the precursor of murein. The polypeptide is UDP-N-acetylmuramoyl-tripeptide--D-alanyl-D-alanine ligase (Borreliella burgdorferi (strain ATCC 35210 / DSM 4680 / CIP 102532 / B31) (Borrelia burgdorferi)).